The following is a 383-amino-acid chain: Anhydro-N-acetylmuramic acid kinase (383 aa).

An ATP-binding site is contributed by 9-16 (GTSVDSID).

It belongs to the anhydro-N-acetylmuramic acid kinase family.

The enzyme catalyses 1,6-anhydro-N-acetyl-beta-muramate + ATP + H2O = N-acetyl-D-muramate 6-phosphate + ADP + H(+). The protein operates within amino-sugar metabolism; 1,6-anhydro-N-acetylmuramate degradation. Its pathway is cell wall biogenesis; peptidoglycan recycling. Functionally, catalyzes the specific phosphorylation of 1,6-anhydro-N-acetylmuramic acid (anhMurNAc) with the simultaneous cleavage of the 1,6-anhydro ring, generating MurNAc-6-P. Is required for the utilization of anhMurNAc either imported from the medium or derived from its own cell wall murein, and thus plays a role in cell wall recycling. This chain is Anhydro-N-acetylmuramic acid kinase, found in Crocosphaera subtropica (strain ATCC 51142 / BH68) (Cyanothece sp. (strain ATCC 51142)).